The sequence spans 637 residues: Poly(U)-binding-splicing factor hfp (637 aa).

Basic and acidic residues-rich tracts occupy residues 1-20 (MGSNDRASRSPRSDDQREIS) and 28-37 (TRSDSGKSTD). Positions 1–41 (MGSNDRASRSPRSDDQREISDMPATKRTRSDSGKSTDSKIP) are disordered. Residues Ser13 and Ser30 each carry the phosphoserine modification. RRM domains lie at 130 to 208 (CRVY…RPSN) and 227 to 305 (NRIY…RSIT). Residues 537–627 (RVIILRNMVG…RRVVAELYDQ (91 aa)) enclose the RRM 3; atypical domain.

It belongs to the RRM half pint family. In terms of assembly, interacts with enc. However, given the cytoplasmic localization of enc, the relevance of such interaction is unclear. In terms of tissue distribution, expressed in all germline cells and within the follicle cell.

It localises to the nucleus. Splicing factor that regulates oogenesis and controls both mitosis and mRNA localization in the germline by regulating mRNA splicing of a subset of genes within the ovary. Probably acts by regulating the alternative splice site selection of the otu transcript. Also regulates the alternative splicing of eIF4E1 and grk, while it is not involved in the splicing of par-1, sqd or psq. Involved in the alternative splicing of the bicistronic pre-mRNA encoding Kdm3 and CG8176; required for the efficient production of mRNA encoding Kdm3 and Kdm3-mediated regulation of rhino-dependent piRNA production. The sequence is that of Poly(U)-binding-splicing factor hfp from Drosophila melanogaster (Fruit fly).